Here is a 92-residue protein sequence, read N- to C-terminus: MNKKQRDAKNKKRFQQQNPLFKRKKFCRFTVAGVEQIDYKDLDTLKDFIGENGKITPARLTGTRSHYQRQLDTAIKRARFLALMPYTDQHKH.

It belongs to the bacterial ribosomal protein bS18 family. As to quaternary structure, part of the 30S ribosomal subunit. Forms a tight heterodimer with protein bS6.

Functionally, binds as a heterodimer with protein bS6 to the central domain of the 16S rRNA, where it helps stabilize the platform of the 30S subunit. The sequence is that of Small ribosomal subunit protein bS18 from Ralstonia nicotianae (strain ATCC BAA-1114 / GMI1000) (Ralstonia solanacearum).